A 943-amino-acid chain; its full sequence is Isoleucine--tRNA ligase (943 aa).

The 'HIGH' region signature appears at 58-68 (PYANGKIHIGH). Position 567 (Glu-567) interacts with L-isoleucyl-5'-AMP. The 'KMSKS' region signature appears at 608-612 (KMSKS). ATP is bound at residue Lys-611. 4 residues coordinate Zn(2+): Cys-906, Cys-909, Cys-926, and Cys-929.

Belongs to the class-I aminoacyl-tRNA synthetase family. IleS type 1 subfamily. In terms of assembly, monomer. The cofactor is Zn(2+).

Its subcellular location is the cytoplasm. The enzyme catalyses tRNA(Ile) + L-isoleucine + ATP = L-isoleucyl-tRNA(Ile) + AMP + diphosphate. In terms of biological role, catalyzes the attachment of isoleucine to tRNA(Ile). As IleRS can inadvertently accommodate and process structurally similar amino acids such as valine, to avoid such errors it has two additional distinct tRNA(Ile)-dependent editing activities. One activity is designated as 'pretransfer' editing and involves the hydrolysis of activated Val-AMP. The other activity is designated 'posttransfer' editing and involves deacylation of mischarged Val-tRNA(Ile). This is Isoleucine--tRNA ligase from Pseudomonas putida (strain W619).